We begin with the raw amino-acid sequence, 398 residues long: 2,3,4,5-tetrahydropyridine-2,6-dicarboxylate N-succinyltransferase (398 aa).

Glu-268 serves as the catalytic Acyl-anhydride intermediate. Residues Arg-270, Gly-285, Ser-288, Ala-311, 326 to 327, Gly-334, Lys-361, and 374 to 377 contribute to the succinyl-CoA site; these read DG and RQNS.

Belongs to the type 2 tetrahydrodipicolinate N-succinyltransferase family. In terms of assembly, homotrimer.

Its subcellular location is the cytoplasm. It catalyses the reaction (S)-2,3,4,5-tetrahydrodipicolinate + succinyl-CoA + H2O = (S)-2-succinylamino-6-oxoheptanedioate + CoA. It functions in the pathway amino-acid biosynthesis; L-lysine biosynthesis via DAP pathway; LL-2,6-diaminopimelate from (S)-tetrahydrodipicolinate (succinylase route): step 1/3. Catalyzes the conversion of the cyclic tetrahydrodipicolinate (THDP) into the acyclic N-succinyl-L-2-amino-6-oxopimelate using succinyl-CoA. The protein is 2,3,4,5-tetrahydropyridine-2,6-dicarboxylate N-succinyltransferase of Sulfurimonas denitrificans (strain ATCC 33889 / DSM 1251) (Thiomicrospira denitrificans (strain ATCC 33889 / DSM 1251)).